The following is a 112-amino-acid chain: Ribosome-binding factor A (112 aa).

The protein belongs to the RbfA family. In terms of assembly, monomer. Binds 30S ribosomal subunits, but not 50S ribosomal subunits or 70S ribosomes.

It localises to the cytoplasm. One of several proteins that assist in the late maturation steps of the functional core of the 30S ribosomal subunit. Associates with free 30S ribosomal subunits (but not with 30S subunits that are part of 70S ribosomes or polysomes). Required for efficient processing of 16S rRNA. May interact with the 5'-terminal helix region of 16S rRNA. The protein is Ribosome-binding factor A of Mycoplasma genitalium (strain ATCC 33530 / DSM 19775 / NCTC 10195 / G37) (Mycoplasmoides genitalium).